We begin with the raw amino-acid sequence, 75 residues long: Small ribosomal subunit protein bS18c (75 aa).

This sequence belongs to the bacterial ribosomal protein bS18 family. As to quaternary structure, part of the 30S ribosomal subunit.

The protein localises to the plastid. It localises to the chloroplast. The polypeptide is Small ribosomal subunit protein bS18c (rps18) (Anthoceros angustus (Hornwort)).